We begin with the raw amino-acid sequence, 226 residues long: Ribonuclease 3 (226 aa).

Positions 6–128 (IQKLQKILGY…LIGSIFLDSN (123 aa)) constitute an RNase III domain. Position 41 (E41) interacts with Mg(2+). Residue D45 is part of the active site. The Mg(2+) site is built by N114 and E117. E117 is an active-site residue. One can recognise a DRBM domain in the interval 155-225 (DPKTRLQEYL…AQNALIKLGI (71 aa)).

The protein belongs to the ribonuclease III family. In terms of assembly, homodimer. It depends on Mg(2+) as a cofactor.

It localises to the cytoplasm. It carries out the reaction Endonucleolytic cleavage to 5'-phosphomonoester.. In terms of biological role, digests double-stranded RNA. Involved in the processing of primary rRNA transcript to yield the immediate precursors to the large and small rRNAs (23S and 16S). Processes some mRNAs, and tRNAs when they are encoded in the rRNA operon. Processes pre-crRNA and tracrRNA of type II CRISPR loci if present in the organism. This chain is Ribonuclease 3, found in Buchnera aphidicola subsp. Baizongia pistaciae (strain Bp).